We begin with the raw amino-acid sequence, 231 residues long: uncharacterized protein (231 aa).

Residues 1 to 10 are compositionally biased toward basic and acidic residues; sequence MDGKKREVEN. The tract at residues 1–35 is disordered; it reads MDGKKREVENGKNGNNIKDGNSSNTTNYGKDTKTT. Residues 11-24 are compositionally biased toward low complexity; that stretch reads GKNGNNIKDGNSSN. Positions 25-35 are enriched in polar residues; it reads TTNYGKDTKTT.

This is an uncharacterized protein from Aquifex aeolicus (strain VF5).